We begin with the raw amino-acid sequence, 475 residues long: Alpha,alpha-trehalose-phosphate synthase [UDP-forming] (475 aa).

D-glucose 6-phosphate is bound by residues Tyr93 and Asp147. UDP is bound by residues Arg285 and Lys290. Arg285 and Lys290 together coordinate UDP-alpha-D-glucose. Arg323 contributes to the D-glucose 6-phosphate binding site. A UDP-alpha-D-glucose-binding site is contributed by 384–392 (DGMNLVSYE). Position 388–392 (388–392 (LVSYE)) interacts with UDP.

The protein belongs to the glycosyltransferase 20 family.

It catalyses the reaction D-glucose 6-phosphate + UDP-alpha-D-glucose = alpha,alpha-trehalose 6-phosphate + UDP + H(+). The protein operates within carbohydrate biosynthesis. In terms of biological role, synthase catalytic subunit of the trehalose synthase complex that catalyzes the production of trehalose from glucose-6-phosphate and UDP-alpha-D-glucose in a two step process. The polypeptide is Alpha,alpha-trehalose-phosphate synthase [UDP-forming] (Pichia angusta (Yeast)).